We begin with the raw amino-acid sequence, 82 residues long: Turripeptide Gsg9.1 (82 aa).

The first 23 residues, 1–23 (MMAKLMITVMTVFFLSLQQGADG), serve as a signal peptide directing secretion. Residues 24–46 (LFERWRKNQMAASRIMGNLITAR) constitute a propeptide that is removed on maturation. 4-hydroxyproline is present on residues P49 and P50. 3 cysteine pairs are disulfide-bonded: C53–C68, C58–C72, and C64–C79. Residues E60 and E63 each carry the 4-carboxyglutamate modification.

Belongs to the Pg turripeptide superfamily. Expressed by the venom duct.

It is found in the secreted. The sequence is that of Turripeptide Gsg9.1 from Gemmula sogodensis (Gem-turris).